A 401-amino-acid chain; its full sequence is Ribosomal RNA large subunit methyltransferase G (401 aa).

The protein belongs to the methyltransferase superfamily. RlmG family.

It is found in the cytoplasm. It carries out the reaction guanosine(1835) in 23S rRNA + S-adenosyl-L-methionine = N(2)-methylguanosine(1835) in 23S rRNA + S-adenosyl-L-homocysteine + H(+). Functionally, specifically methylates the guanine in position 1835 (m2G1835) of 23S rRNA. This is Ribosomal RNA large subunit methyltransferase G from Shewanella loihica (strain ATCC BAA-1088 / PV-4).